Consider the following 93-residue polypeptide: Small ribosomal subunit protein uS19 (93 aa).

The protein belongs to the universal ribosomal protein uS19 family.

In terms of biological role, protein S19 forms a complex with S13 that binds strongly to the 16S ribosomal RNA. In Rubrobacter xylanophilus (strain DSM 9941 / JCM 11954 / NBRC 16129 / PRD-1), this protein is Small ribosomal subunit protein uS19.